We begin with the raw amino-acid sequence, 132 residues long: MRAIKAKIPRSVHTATRLEVADNTGARLVEVISVLKYRGRKNRMPKAGIGDIFIGSVKKGTPEMRKTIVRCVVIRQKKEYRRPSGLRVSFEDNACVLVDDNNDPKGTEIKGPVAREVAERYAKIGSTATIIV.

The protein belongs to the universal ribosomal protein uL14 family. As to quaternary structure, part of the 50S ribosomal subunit. Forms a cluster with proteins L3 and L24e, part of which may contact the 16S rRNA in 2 intersubunit bridges.

In terms of biological role, binds to 23S rRNA. Forms part of two intersubunit bridges in the 70S ribosome. The polypeptide is Large ribosomal subunit protein uL14 (Methanocella arvoryzae (strain DSM 22066 / NBRC 105507 / MRE50)).